The following is a 384-amino-acid chain: Formate-dependent phosphoribosylglycinamide formyltransferase (384 aa).

Residues 14–15 (EL) and E74 contribute to the N(1)-(5-phospho-beta-D-ribosyl)glycinamide site. Residues R106, K147, 152–157 (SSGKGQ), 187–190 (EEFI), and E195 each bind ATP. Residues 111 to 300 (RLAAETLGLA…EFALHVRAIL (190 aa)) form the ATP-grasp domain. Residues E259 and E271 each contribute to the Mg(2+) site. Residues D278, K348, and 355 to 356 (RR) each bind N(1)-(5-phospho-beta-D-ribosyl)glycinamide.

This sequence belongs to the PurK/PurT family. In terms of assembly, homodimer.

It catalyses the reaction N(1)-(5-phospho-beta-D-ribosyl)glycinamide + formate + ATP = N(2)-formyl-N(1)-(5-phospho-beta-D-ribosyl)glycinamide + ADP + phosphate + H(+). The protein operates within purine metabolism; IMP biosynthesis via de novo pathway; N(2)-formyl-N(1)-(5-phospho-D-ribosyl)glycinamide from N(1)-(5-phospho-D-ribosyl)glycinamide (formate route): step 1/1. Catalyzes two reactions: the first one is the production of beta-formyl glycinamide ribonucleotide (GAR) from formate, ATP and beta GAR; the second, a side reaction, is the production of acetyl phosphate and ADP from acetate and ATP. In terms of biological role, involved in the de novo purine biosynthesis. Catalyzes the transfer of formate to 5-phospho-ribosyl-glycinamide (GAR), producing 5-phospho-ribosyl-N-formylglycinamide (FGAR). Formate is provided by PurU via hydrolysis of 10-formyl-tetrahydrofolate. The protein is Formate-dependent phosphoribosylglycinamide formyltransferase of Bacillus subtilis (strain 168).